We begin with the raw amino-acid sequence, 246 residues long: E3 ubiquitin-protein ligase RNF182 (246 aa).

Residues 22-70 (CKICYNRYNLRQRKPKVLGCCHRVCAKCLYKLVDCGESPQCVIVCPFCR) form an RING-type zinc finger. 2 helical membrane-spanning segments follow: residues 184–204 (VFVW…IYLL) and 211–231 (LGVV…IYGF).

Interacts with ATP6V0C.

It localises to the membrane. The protein resides in the cytoplasm. The catalysed reaction is S-ubiquitinyl-[E2 ubiquitin-conjugating enzyme]-L-cysteine + [acceptor protein]-L-lysine = [E2 ubiquitin-conjugating enzyme]-L-cysteine + N(6)-ubiquitinyl-[acceptor protein]-L-lysine.. It participates in protein modification; protein ubiquitination. In terms of biological role, E3 ubiquitin-protein ligase that mediates the ubiquitination of atp6v0c and targets it to degradation via the ubiquitin-proteasome pathway. This Xenopus laevis (African clawed frog) protein is E3 ubiquitin-protein ligase RNF182 (rnf182).